A 472-amino-acid chain; its full sequence is Estrogen receptor beta (472 aa).

Residues Met1 to Phe104 form a modulating region. 2 NR C4-type zinc fingers span residues Cys105–Cys125 and Cys141–Cys165. A DNA-binding region (nuclear receptor) is located at residues Cys105–Met170. In terms of domain architecture, NR LBD spans Ser217 to His449.

Belongs to the nuclear hormone receptor family. NR3 subfamily. As to quaternary structure, binds DNA as a homodimer. Can form a heterodimer with ER-alpha. As to expression, a high expression is seen in the telencephalon, diencephalon, pituitary, testis and kidneys but little or no expression is seen in the cerebellum, pectoral muscle and adrenal gland.

It is found in the nucleus. Functionally, binds estrogens with an affinity similar to that of ER-alpha, and activates expression of reporter genes containing estrogen response elements (ERE) in an estrogen-dependent manner. This chain is Estrogen receptor beta (ESR2), found in Coturnix japonica (Japanese quail).